Consider the following 145-residue polypeptide: Small ribosomal subunit protein uS12 (145 aa).

Belongs to the universal ribosomal protein uS12 family. As to quaternary structure, part of the 30S ribosomal subunit.

With S4 and S5 plays an important role in translational accuracy. Located at the interface of the 30S and 50S subunits. The protein is Small ribosomal subunit protein uS12 of Cenarchaeum symbiosum (strain A).